The chain runs to 402 residues: Multidrug resistance protein MdtH (402 aa).

Residues 1–12 (MSRVSQARNLGK) lie on the Cytoplasmic side of the membrane. Residues 13-33 (YFLLIDNMLVVLGFFVVFPLI) form a helical membrane-spanning segment. Over 34–98 (SIRFVDQMGW…GFATMGIAHE (65 aa)) the chain is Periplasmic. Residues 99–116 (PWLLWFSCFLSGLGGTLF) traverse the membrane as a helical segment. Residues 117-138 (DPPRSALVVKLIRPEQRDRFFS) are Cytoplasmic-facing. Residues 139-159 (LLMMQDSAGAVIGALLGSWLL) form a helical membrane-spanning segment. Topologically, residues 160–164 (QYDFR) are periplasmic. A helical membrane pass occupies residues 165-185 (LVCATGAILFILCALFNAWLL). At 186 to 213 (PAWKLSTVRTPVREGMRRVMSDKRFVTY) the chain is on the cytoplasmic side. The chain crosses the membrane as a helical span at residues 214–234 (VLTLAGYYMLAVQVMLMLPIM). Over 235–243 (VNDIAGSPA) the chain is Periplasmic. A helical transmembrane segment spans residues 244–264 (AVKWMYAIEACLSLTLLYPIA). The Cytoplasmic portion of the chain corresponds to 265–276 (RWSEKRFRLEHR). The chain crosses the membrane as a helical span at residues 277-297 (LMAGLLVMSLSMLPIGMVGNL). Residues 298–299 (QQ) lie on the Periplasmic side of the membrane. A helical membrane pass occupies residues 300–320 (LFTLICAFYIGSVIAEPARET). The Cytoplasmic portion of the chain corresponds to 321–339 (LSASLADARARGSYMGFSR). A helical transmembrane segment spans residues 340–360 (LGLAIGGAIGYIGGGWLFDMG). Topologically, residues 361-367 (KALAQPE) are periplasmic. The chain crosses the membrane as a helical span at residues 368–388 (LPWMMLGIIGFITFLALGWQF). The Cytoplasmic portion of the chain corresponds to 389–402 (SHKRTPRRMLEPGA).

The protein belongs to the major facilitator superfamily. DHA1 family. MdtH (TC 2.A.1.2.21) subfamily.

Its subcellular location is the cell inner membrane. This Salmonella typhimurium (strain LT2 / SGSC1412 / ATCC 700720) protein is Multidrug resistance protein MdtH.